The sequence spans 564 residues: Dihydroxy-acid dehydratase (564 aa).

A [2Fe-2S] cluster-binding site is contributed by Cys53. Asp85 provides a ligand contact to Mg(2+). Cys126 is a [2Fe-2S] cluster binding site. 2 residues coordinate Mg(2+): Asp127 and Lys128. The residue at position 128 (Lys128) is an N6-carboxylysine. Cys203 contributes to the [2Fe-2S] cluster binding site. Glu454 is a binding site for Mg(2+). The Proton acceptor role is filled by Ser480.

It belongs to the IlvD/Edd family. In terms of assembly, homodimer. It depends on [2Fe-2S] cluster as a cofactor. Requires Mg(2+) as cofactor.

It catalyses the reaction (2R)-2,3-dihydroxy-3-methylbutanoate = 3-methyl-2-oxobutanoate + H2O. It carries out the reaction (2R,3R)-2,3-dihydroxy-3-methylpentanoate = (S)-3-methyl-2-oxopentanoate + H2O. It participates in amino-acid biosynthesis; L-isoleucine biosynthesis; L-isoleucine from 2-oxobutanoate: step 3/4. Its pathway is amino-acid biosynthesis; L-valine biosynthesis; L-valine from pyruvate: step 3/4. In terms of biological role, functions in the biosynthesis of branched-chain amino acids. Catalyzes the dehydration of (2R,3R)-2,3-dihydroxy-3-methylpentanoate (2,3-dihydroxy-3-methylvalerate) into 2-oxo-3-methylpentanoate (2-oxo-3-methylvalerate) and of (2R)-2,3-dihydroxy-3-methylbutanoate (2,3-dihydroxyisovalerate) into 2-oxo-3-methylbutanoate (2-oxoisovalerate), the penultimate precursor to L-isoleucine and L-valine, respectively. This chain is Dihydroxy-acid dehydratase, found in Mycobacterium ulcerans (strain Agy99).